A 438-amino-acid polypeptide reads, in one-letter code: RING finger protein 150 (438 aa).

Positions 1–34 (MAMSLIQACCSLALSTWLLSFCFVHLLCLDFTVA) are cleaved as a signal peptide. Over 35-208 (EKEEWYTAFV…NLQKYVSRTS (174 aa)) the chain is Extracellular. N-linked (GlcNAc...) asparagine glycosylation is found at asparagine 45, asparagine 125, asparagine 153, and asparagine 186. Residues 81-183 (SPKQDARGEV…PKGKEIVSLL (103 aa)) form the PA domain. A helical transmembrane segment spans residues 209-229 (VVFVSISFIVLMIISLAWLVF). The Cytoplasmic segment spans residues 230-438 (YYIQRFRYAN…TDQDCEEVKS (209 aa)). An RING-type; atypical zinc finger spans residues 278–319 (CAVCIEGYKPNDVVRILPCRHLFHKSCVDPWLLDHRTCPMCK).

It is found in the membrane. The sequence is that of RING finger protein 150 (RNF150) from Homo sapiens (Human).